The sequence spans 782 residues: Zinc finger protein 786 (782 aa).

A KRAB domain is found at 9 to 80; that stretch reads LTFEDVAIYF…WRESQKSGNI (72 aa). A disordered region spans residues 141–164; the sequence is PQRHDARAPPPLACGPSESTLKEG. A C2H2-type 1; degenerate zinc finger spans residues 192–209; that stretch reads CGESCWENNHLVMHQRGH. The C2H2-type 2 zinc finger occupies 240–262; that stretch reads FRCGVCGKSFRRKLCLLRHLAAH. The disordered stretch occupies residues 285–364; the sequence is SHRLPQQGEK…EGDTEALQHG (80 aa). Residues 369-391 form a C2H2-type 3; degenerate zinc finger; sequence CSCSECGERSPMSARLASPCRAH. 3 C2H2-type zinc fingers span residues 397–419, 425–447, and 453–475; these read FQCA…QHAH, FSCR…IRVH, and FRCA…QRLH. The C2H2-type 7; degenerate zinc-finger motif lies at 481–503; it reads FQCPECGLSFRLESMLRAHRLRH. 9 consecutive C2H2-type zinc fingers follow at residues 509–531, 537–559, 565–587, 593–615, 621–643, 649–670, 676–698, 704–726, and 732–754; these read FSCS…LRVH, FQCL…QHTH, FSCG…LRVH, FQCP…QRLH, FQCP…QLLH, FSCE…IRTH, FQCP…QGLH, FHCP…QRIH, and FACG…IRVH.

The protein belongs to the krueppel C2H2-type zinc-finger protein family.

The protein resides in the nucleus. Functionally, may be involved in transcriptional regulation. In Homo sapiens (Human), this protein is Zinc finger protein 786 (ZNF786).